Consider the following 392-residue polypeptide: RNA-binding protein 42 (392 aa).

The 79-residue stretch at Phe293–Trp371 folds into the RRM domain. A disordered region spans residues Lys372–Arg392. Over residues Lys381–Arg392 the composition is skewed to basic residues.

Belongs to the RRM RBM42 family.

Its subcellular location is the nucleus. It localises to the cytoplasm. In terms of biological role, may bind RNA. The sequence is that of RNA-binding protein 42 (rbm42) from Xenopus tropicalis (Western clawed frog).